We begin with the raw amino-acid sequence, 233 residues long: Counting factor-associated protein A (233 aa).

The first 21 residues, 1–21, serve as a signal peptide directing secretion; the sequence is MKLLNSLILLVLTCLVSSINT. N-linked (GlcNAc...) asparagine glycans are attached at residues N37 and N189.

Its subcellular location is the secreted. In Dictyostelium discoideum (Social amoeba), this protein is Counting factor-associated protein A (cfaA).